Reading from the N-terminus, the 450-residue chain is 3-phosphoshikimate 1-carboxyvinyltransferase (450 aa).

The tract at residues 1–25 is disordered; sequence MSAHGDPKPMTARKGGALTGTAEVP. Lys28, Ser29, and Arg33 together coordinate 3-phosphoshikimate. Lys28 lines the phosphoenolpyruvate pocket. Positions 101 and 129 each coordinate phosphoenolpyruvate. Positions 174, 176, 327, and 354 each coordinate 3-phosphoshikimate. Gln176 contacts phosphoenolpyruvate. Asp327 (proton acceptor) is an active-site residue. Phosphoenolpyruvate-binding residues include Arg358 and Arg403.

It belongs to the EPSP synthase family. As to quaternary structure, monomer.

It is found in the cytoplasm. It catalyses the reaction 3-phosphoshikimate + phosphoenolpyruvate = 5-O-(1-carboxyvinyl)-3-phosphoshikimate + phosphate. It participates in metabolic intermediate biosynthesis; chorismate biosynthesis; chorismate from D-erythrose 4-phosphate and phosphoenolpyruvate: step 6/7. Catalyzes the transfer of the enolpyruvyl moiety of phosphoenolpyruvate (PEP) to the 5-hydroxyl of shikimate-3-phosphate (S3P) to produce enolpyruvyl shikimate-3-phosphate and inorganic phosphate. The chain is 3-phosphoshikimate 1-carboxyvinyltransferase from Jannaschia sp. (strain CCS1).